A 197-amino-acid chain; its full sequence is Rac-like GTP-binding protein RHO1 (197 aa).

13–20 (GDGAVGKT) serves as a coordination point for GTP. Positions 35–43 (YVPTVFDNF) match the Effector region motif. Residues 60–64 (DTAGQ) and 118–121 (TKLD) contribute to the GTP site. Cys-194 carries the cysteine methyl ester modification. Cys-194 is lipidated: S-geranylgeranyl cysteine. Positions 195 to 197 (SIL) are cleaved as a propeptide — removed in mature form.

Belongs to the small GTPase superfamily. Rho family. Expressed at the tip of pollen tubes.

The protein localises to the cytoplasm. It localises to the membrane. Functionally, inactive GDP-bound Rho GTPases reside in the cytosol, are found in a complex with Rho GDP-dissociation inhibitors (Rho GDIs), and are released from the GDI protein in order to translocate to membranes upon activation. May be involved in cell polarity control during the actin-dependent tip growth of pollen tubes. The chain is Rac-like GTP-binding protein RHO1 (RHO1) from Pisum sativum (Garden pea).